Reading from the N-terminus, the 281-residue chain is Phosphonates import ATP-binding protein PhnC (281 aa).

In terms of domain architecture, ABC transporter spans 2-245 (FELKDVTRRF…AVKEIYGTDK (244 aa)). Residue 34–41 (GRSGAGKS) coordinates ATP.

This sequence belongs to the ABC transporter superfamily. Phosphonates importer (TC 3.A.1.9.1) family. In terms of assembly, the complex is composed of two ATP-binding proteins (PhnC), two transmembrane proteins (PhnE) and a solute-binding protein (PhnD).

It is found in the cell inner membrane. It carries out the reaction phosphonate(out) + ATP + H2O = phosphonate(in) + ADP + phosphate + H(+). Its function is as follows. Part of the ABC transporter complex PhnCDE involved in phosphonates import. Responsible for energy coupling to the transport system. This Rhizobium etli (strain ATCC 51251 / DSM 11541 / JCM 21823 / NBRC 15573 / CFN 42) protein is Phosphonates import ATP-binding protein PhnC.